The sequence spans 1124 residues: MDPFTEKLLERTRARRENLQRKMAERPTAAPRSMTHAKRARQPLSEASNQQPLSGGEEKSCTKPSPSKKRCSDNTEVEVSNLENKQPVESTSAKSCSPSPVSPQVQPQAADTISDSVAVPASLLGMRRGLNSRLEATAASSVKTRMQKLAEQRRRWDNDDMTDDIPESSLFSPMPSEEKAASPPRPLLSNASATPVGRRGRLANLAATICSWEDDVNHSFAKQNSVQEQPGTACLSKFSSASGASARINSSSVKQEATFCSQRDGDASLNKALSSSADDASLVNASISSSVKATSPVKSTTSITDAKSCEGQNPELLPKTPISPLKTGVSKPIVKSTLSQTVPSKGELSREICLQSQSKDKSTTPGGTGIKPFLERFGERCQEHSKESPARSTPHRTPIITPNTKAIQERLFKQDTSSSTTHLAQQLKQERQKELACLRGRFDKGNIWSAEKGGNSKSKQLETKQETHCQSTPLKKHQGVSKTQSLPVTEKVTENQIPAKNSSTEPKGFTECEMTKSSPLKITLFLEEDKSLKVTSDPKVEQKIEVIREIEMSVDDDDINSSKVINDLFSDVLEEGELDMEKSQEEMDQALAESSEEQEDALNISSMSLLAPLAQTVGVVSPESLVSTPRLELKDTSRSDESPKPGKFQRTRVPRAESGDSLGSEDRDLLYSIDAYRSQRFKETERPSIKQVIVRKEDVTSKLDEKNNAFPCQVNIKQKMQELNNEINMQQTVIYQASQALNCCVDEEHGKGSLEEAEAERLLLIATGKRTLLIDELNKLKNEGPQRKNKASPQSEFMPSKGSVTLSEIRLPLKADFVCSTVQKPDAANYYYLIILKAGAENMVATPLASTSNSLNGDALTFTTTFTLQDVSNDFEINIEVYSLVQKKDPSGLDKKKKTSKSKAITPKRLLTSITTKSNIHSSVMASPGGLSAVRTSNFALVGSYTLSLSSVGNTKFVLDKVPFLSSLEGHIYLKIKCQVNSSVEERGFLTIFEDVSGFGAWHRRWCVLSGNCISYWTYPDDEKRKNPIGRINLANCTSRQIEPANREFCARRNTFELITVRPQREDDRETLVSQCRDTLCVTKNWLSADTKEERDLWMQKLNQVLVDIRLWQPDACYKPIGKP.

The residue at position 1 (Met1) is an N-acetylmethionine. Residues 1-25 (MDPFTEKLLERTRARRENLQRKMAE) are compositionally biased toward basic and acidic residues. Positions 1–45 (MDPFTEKLLERTRARRENLQRKMAERPTAAPRSMTHAKRARQPLS) are required for ubiquitination. Disordered stretches follow at residues 1–113 (MDPF…ADTI) and 136–196 (ATAA…ATPV). The segment at 1-155 (MDPFTEKLLE…MQKLAEQRRR (155 aa)) is interaction with CD2AP. The interval 1 to 230 (MDPFTEKLLE…AKQNSVQEQP (230 aa)) is nuclear localization. Residues Ser54 and Ser72 each carry the phosphoserine modification. Over residues 77–96 (VEVSNLENKQPVESTSAKSC) the composition is skewed to polar residues. Phosphoserine is present on residues Ser97 and Ser102. Over residues 97-108 (SPSPVSPQVQPQ) the composition is skewed to low complexity. Residues 148 to 158 (KLAEQRRRWDN) are compositionally biased toward basic and acidic residues. A phosphoserine mark is found at Ser172 and Ser182. Position 194 is a phosphothreonine (Thr194). Phosphoserine occurs at positions 225 and 252. Residues 231–676 (GTACLSKFSS…RDLLYSIDAY (446 aa)) are interaction with F-actin. Lys254 is covalently cross-linked (Glycyl lysine isopeptide (Lys-Gly) (interchain with G-Cter in SUMO1)). Ser261 is modified (phosphoserine). Polar residues predominate over residues 294 to 305 (TSPVKSTTSITD). The tract at residues 294–328 (TSPVKSTTSITDAKSCEGQNPELLPKTPISPLKTG) is disordered. Thr320 carries the phosphothreonine modification. Phosphoserine occurs at positions 323 and 339. Thr364 carries the phosphothreonine modification. Position 371 is an N6-acetyllysine (Lys371). Basic and acidic residues predominate over residues 380-389 (RCQEHSKESP). The segment at 380-399 (RCQEHSKESPARSTPHRTPI) is disordered. Thr397 and Thr401 each carry phosphothreonine. Ser417, Ser419, Ser449, Ser485, Ser518, Ser553, and Ser561 each carry phosphoserine. A coiled-coil region spans residues 569-604 (FSDVLEEGELDMEKSQEEMDQALAESSEEQEDALNI). 2 disordered regions span residues 579–600 (DMEKSQEEMDQALAESSEEQED) and 625–664 (LVSTPRLELKDTSRSDESPKPGKFQRTRVPRAESGDSLGS). 2 stretches are compositionally biased toward basic and acidic residues: residues 631-644 (LELKDTSRSDESPK) and 654-664 (PRAESGDSLGS). A phosphoserine mark is found at Ser637, Ser642, Ser658, Ser661, and Ser664. Tyr671 carries the post-translational modification Phosphotyrosine. A phosphoserine mark is found at Ser678, Ser688, Ser792, and Ser927. A localization to the cleavage furrow region spans residues 730–1124 (QQTVIYQASQ…DACYKPIGKP (395 aa)). Residues 983-1107 (SVEERGFLTI…WMQKLNQVLV (125 aa)) enclose the PH domain.

As to quaternary structure, interacts with F-actin. Interacts with CD2AP. May interact with RHOA. Interacts with FZR1/CDH1 during mitotic exit. Phosphorylated during mitosis. In terms of processing, ubiquitinated, and this requires FZR1/CDH1. In terms of tissue distribution, ubiquitously expressed. Present at highest levels in the brain, at high levels in the placenta and testis, at intermediate levels in the intestine, ovary, skeletal muscle and thymus and at lower levels in heart, kidney, liver, lung, pancreas, prostate and spleen. In the kidney, it is widely expressed in tubules, but sparsely expressed in the glomerulus. Expression is significantly increased in renal biopsy specimens from idiopathic FSGS. Overexpressed in many tumor types including breast, colorectal, endometrial, hepatic, kidney, lung, ovarian and pancreatic tumors.

It localises to the nucleus. Its subcellular location is the cytoplasm. The protein localises to the cytoskeleton. It is found in the cell cortex. The protein resides in the cell projection. It localises to the bleb. Functionally, required for cytokinesis. Essential for the structural integrity of the cleavage furrow and for completion of cleavage furrow ingression. Plays a role in bleb assembly during metaphase and anaphase of mitosis. May play a significant role in podocyte cell migration. The protein is Anillin (ANLN) of Homo sapiens (Human).